The sequence spans 484 residues: Catalase (484 aa).

Methionine 53 carries the post-translational modification Methionine sulfone. Catalysis depends on residues histidine 54 and asparagine 127. Tyrosine 337 serves as a coordination point for heme.

Homotetramer. It depends on heme as a cofactor. NADP(+) serves as cofactor.

Its subcellular location is the cytoplasm. It catalyses the reaction 2 H2O2 = O2 + 2 H2O. In terms of biological role, decomposes hydrogen peroxide into water and oxygen; serves to protect cells from the toxic effects of hydrogen peroxide. This Proteus mirabilis protein is Catalase (katA).